Here is a 451-residue protein sequence, read N- to C-terminus: Probable plasmid replicative DNA helicase (451 aa).

One can recognise an SF4 helicase domain in the interval 194 to 451; it reads NDSFYDGLPT…SKFSAIKKVW (258 aa). 225–232 serves as a coordination point for ATP; the sequence is ARPSIGKT.

Belongs to the helicase family. DnaB subfamily. In terms of assembly, homohexamer.

The enzyme catalyses Couples ATP hydrolysis with the unwinding of duplex DNA at the replication fork by translocating in the 5'-3' direction. This creates two antiparallel DNA single strands (ssDNA). The leading ssDNA polymer is the template for DNA polymerase III holoenzyme which synthesizes a continuous strand.. It catalyses the reaction ATP + H2O = ADP + phosphate + H(+). Its function is as follows. A replicative DNA helicase, it participates in initiation and elongation during DNA replication. Travels ahead of the DNA replisome, separating dsDNA into templates for DNA synthesis. A processive ATP-dependent 5'-3' DNA helicase it has DNA-dependent ATPase activity. This Chlamydia muridarum (strain MoPn / Nigg) protein is Probable plasmid replicative DNA helicase.